The chain runs to 127 residues: Phospholipase A2 homolog otoconin-22 (127 aa).

Residue Asn20 is glycosylated (N-linked (GlcNAc...) asparagine). 7 cysteine pairs are disulfide-bonded: Cys26-Cys120, Cys28-Cys44, Cys43-Cys99, Cys49-Cys127, Cys50-Cys92, Cys59-Cys85, and Cys78-Cys90. A glycan (N-linked (GlcNAc...) asparagine) is linked at Asn113.

Belongs to the phospholipase A2 family. In terms of assembly, monomer. In terms of tissue distribution, otoconial membrane in the maculae of the saccule and utricle. Otoconia are composites of proteins and inorganic crystals formed in the peripheral portion of the vestibular system of vertebrates. The otoconial membranes contain small crystals of calcium carbonate known as otoliths (ear stones) if there is a single deposit or as otoconia (ear dust) if there are many. Each mineral polymorph of otoconia has a protein unique to that polymorph.

It localises to the secreted. In terms of biological role, major protein of the aragonitic otoconia. It is unlikely that this protein has phospholipase A2 activity. This Xenopus laevis (African clawed frog) protein is Phospholipase A2 homolog otoconin-22.